Consider the following 287-residue polypeptide: 26S proteasome non-ATPase regulatory subunit 8 (287 aa).

Phosphoserine is present on Ser-43. The PCI domain occupies 99-268 (PSFERYMAQL…QQKPEDTTIP (170 aa)). Lys-234 participates in a covalent cross-link: Glycyl lysine isopeptide (Lys-Gly) (interchain with G-Cter in SUMO2).

It belongs to the proteasome subunit S14 family. In terms of assembly, component of the 19S proteasome regulatory particle complex. The 26S proteasome consists of a 20S core particle (CP) and two 19S regulatory subunits (RP). The regulatory particle is made of a lid composed of 9 subunits including PSMD8, a base containing 6 ATPases and few additional components. Interacts with DDI2. Interacts with TASOR.

Functionally, component of the 26S proteasome, a multiprotein complex involved in the ATP-dependent degradation of ubiquitinated proteins. This complex plays a key role in the maintenance of protein homeostasis by removing misfolded or damaged proteins, which could impair cellular functions, and by removing proteins whose functions are no longer required. Therefore, the proteasome participates in numerous cellular processes, including cell cycle progression, apoptosis, or DNA damage repair. The polypeptide is 26S proteasome non-ATPase regulatory subunit 8 (PSMD8) (Bos taurus (Bovine)).